Consider the following 294-residue polypeptide: NAD kinase (294 aa).

The active-site Proton acceptor is Asp74. NAD(+) is bound by residues 74 to 75, 148 to 149, Arg159, Arg176, Asp178, 189 to 194, and Gln247; these read DG, ND, and TAYALS.

It belongs to the NAD kinase family. Requires a divalent metal cation as cofactor.

The protein localises to the cytoplasm. It catalyses the reaction NAD(+) + ATP = ADP + NADP(+) + H(+). Involved in the regulation of the intracellular balance of NAD and NADP, and is a key enzyme in the biosynthesis of NADP. Catalyzes specifically the phosphorylation on 2'-hydroxyl of the adenosine moiety of NAD to yield NADP. In Azoarcus sp. (strain BH72), this protein is NAD kinase.